Here is a 274-residue protein sequence, read N- to C-terminus: MVGRRALIVLAHSERTSFNYAMKEAAAAALKKKGWEVVESDLYAMNFNPIISRKDITGKLKDPANFQYPAESVLAYKEGHLSPDIVAEQKKLEAADLVIFQFPLQWFGVPAILKGWFERVFIGEFAYTYAAMYDKGPFRSKKAVLSITTGGSGSMYSLQGIHGDMNVILWPIQSGILHFCGFQVLEPQLTYSIGHTPADARIQILEGWKKRLENIWDETPLYFAPSSLFDLNFQAGFLMKKEVQDEEKNKKFGLSVGHHLGKSIPTDNQIKARK.

FAD contacts are provided by residues His12, 18–19 (FN), and Gln67. Phosphoserine is present on Ser82. 104–107 (LQWF) is a binding site for FAD. Position 126–128 (126–128 (AYT)) interacts with substrate. Residues 148–151 (TTGG), Tyr156, and Arg201 each bind FAD. The tract at residues 225–274 (PSSLFDLNFQAGFLMKKEVQDEEKNKKFGLSVGHHLGKSIPTDNQIKARK) is important for apoenzyme conformational stability. Glycyl lysine isopeptide (Lys-Gly) (interchain with G-Cter in SUMO2) cross-links involve residues Lys250 and Lys251.

The protein belongs to the NAD(P)H dehydrogenase (quinone) family. Homodimer. Interacts with PDLIM4 isoform 2; this interaction stabilizes PDLIM4 isoform 2 in response to oxidative stress and protects it from ubiquitin-independent degradation by the core 20S proteasome. Interacts with TP73 (via SAM domain); this interaction is NADH-dependent, stabilizes TP73 in response to oxidative stress and protects it from ubiquitin-independent degradation by the 20S proteasome. Interacts with TP53; this interaction is NADH-dependent, stabilizes TP53 in response to oxidative stress and protects it from ubiquitin-independent degradation by the 20S proteasome. FAD serves as cofactor.

It localises to the cytoplasm. Its subcellular location is the cytosol. It catalyses the reaction a quinone + NADH + H(+) = a quinol + NAD(+). The catalysed reaction is a quinone + NADPH + H(+) = a quinol + NADP(+). It carries out the reaction ubiquinone-10 + NADH + H(+) = ubiquinol-10 + NAD(+). The enzyme catalyses menadione + NADH + H(+) = menadiol + NAD(+). Its activity is regulated as follows. Inhibited by dicoumarol. Functionally, flavin-containing quinone reductase that catalyzes two-electron reduction of quinones to hydroquinones using either NADH or NADPH as electron donors. In a ping-pong kinetic mechanism, the electrons are sequentially transferred from NAD(P)H to flavin cofactor and then from reduced flavin to the quinone, bypassing the formation of semiquinone and reactive oxygen species. Regulates cellular redox state primarily through quinone detoxification. Reduces components of plasma membrane redox system such as coenzyme Q and vitamin quinones, producing antioxidant hydroquinone forms. In the process may function as superoxide scavenger to prevent hydroquinone oxidation and facilitate excretion. Alternatively, can activate quinones and their derivatives by generating redox reactive hydroquinones with DNA cross-linking antitumor potential. Acts as a gatekeeper of the core 20S proteasome known to degrade proteins with unstructured regions. Upon oxidative stress, interacts with tumor suppressors TP53 and TP73 in a NADH-dependent way and inhibits their ubiquitin-independent degradation by the 20S proteasome. The sequence is that of NAD(P)H dehydrogenase [quinone] 1 from Homo sapiens (Human).